Reading from the N-terminus, the 1194-residue chain is Multidrug efflux ATP-binding/permease protein Rv0194 (1194 aa).

Helical transmembrane passes span 20 to 40 (LLLG…VPLV), 56 to 76 (LAPW…LMYV), 130 to 150 (LLFD…GVAV), 153 to 173 (WLSV…GLIA), 258 to 278 (FALG…FVAF), and 279 to 299 (WACL…LTIA). Residues 21 to 301 (LLGFGAALAG…LAGMLTIAQQ (281 aa)) form the ABC transmembrane type-1 1 domain. Residues 334–568 (LEFQRVSFGY…CPRYRELLSP (235 aa)) enclose the ABC transporter 1 domain. Position 367 to 374 (367 to 374 (GAPGSGKS)) interacts with ATP. 6 consecutive transmembrane segments (helical) span residues 628 to 648 (ALSL…PLLI), 660 to 680 (VLSA…IRWV), 743 to 763 (LVVA…LLAI), 765 to 785 (ARLV…TWQF), 847 to 867 (LLAL…TLVL), and 878 to 898 (VISV…YTPI). Residues 628–910 (ALSLLLVAVQ…LAQMFDDYQR (283 aa)) enclose the ABC transmembrane type-1 2 domain. The ABC transporter 2 domain occupies 942 to 1177 (VVFDAVHYSY…GGHYSRLWAA (236 aa)). 976–983 (GSTGSGKS) is an ATP binding site.

It belongs to the ABC transporter superfamily. Lipid exporter (TC 3.A.1.106) family.

The protein localises to the cell inner membrane. Its activity is regulated as follows. Efflux is inhibited by reserpine. Overexpression in M.smegmatis increases resistance to erythromycin, ampicillin, novobiocin and vancomycin. It also reduces accumulation of ethidium bromide in the cell. The protein is Multidrug efflux ATP-binding/permease protein Rv0194 of Mycobacterium tuberculosis (strain ATCC 25618 / H37Rv).